The following is a 297-amino-acid chain: Calponin-1 (297 aa).

In terms of domain architecture, Calponin-homology (CH) spans H28–A131. Calponin-like repeat units lie at residues I164–Y189, I204–F229, and V243–Y268. T170 is subject to Phosphothreonine; by ROCK2. S175 carries the post-translational modification Phosphoserine; by ROCK2. Phosphothreonine; by ROCK2 occurs at positions 180 and 184. T259 is modified (phosphothreonine; by ROCK2).

It belongs to the calponin family. In terms of assembly, part of cGMP kinase signaling complex at least composed of ACTA2/alpha-actin, CNN1/calponin H1, PLN/phospholamban, PRKG1 and ITPR1.

Functionally, thin filament-associated protein that is implicated in the regulation and modulation of smooth muscle contraction. It is capable of binding to actin, calmodulin and tropomyosin. The interaction of calponin with actin inhibits the actomyosin Mg-ATPase activity. The chain is Calponin-1 (CNN1) from Ovis aries (Sheep).